The primary structure comprises 406 residues: Tyrosine--tRNA ligase (406 aa).

Tyrosine 35 contributes to the L-tyrosine binding site. Positions 40-49 match the 'HIGH' region motif; sequence PTADSLHVGH. Tyrosine 168 and glutamine 172 together coordinate L-tyrosine. The 'KMSKS' region motif lies at 228-232; the sequence is KMGKT. Lysine 231 contacts ATP. One can recognise an S4 RNA-binding domain in the interval 340–404; the sequence is SELLDILVEA…RGKKNYNKIV (65 aa).

Belongs to the class-I aminoacyl-tRNA synthetase family. TyrS type 1 subfamily. Homodimer.

The protein localises to the cytoplasm. The catalysed reaction is tRNA(Tyr) + L-tyrosine + ATP = L-tyrosyl-tRNA(Tyr) + AMP + diphosphate + H(+). In terms of biological role, catalyzes the attachment of tyrosine to tRNA(Tyr) in a two-step reaction: tyrosine is first activated by ATP to form Tyr-AMP and then transferred to the acceptor end of tRNA(Tyr). In Clostridium perfringens (strain SM101 / Type A), this protein is Tyrosine--tRNA ligase.